The primary structure comprises 799 residues: Transcriptional activator FLO8 (799 aa).

7 disordered regions span residues Thr-37–Lys-68, Ala-101–Phe-127, Thr-255–Lys-406, Asn-431–Val-501, Glu-568–Phe-622, Val-644–Asp-691, and Ala-705–Gln-758. Positions Gln-41–Gln-55 are enriched in low complexity. Residues Cys-73–Arg-105 enclose the LisH domain. Residues Asp-270 to Thr-285 are compositionally biased toward polar residues. Positions Asn-307–Asn-317 are enriched in low complexity. Residues Lys-318 to Pro-340 show a composition bias toward polar residues. The span at Thr-341–Lys-353 shows a compositional bias: low complexity. Basic residues predominate over residues Ala-354 to Asn-370. Composition is skewed to polar residues over residues Asn-371–Ser-395 and Lys-460–Val-480. Residues Gly-482–Ser-497 are compositionally biased toward basic residues. Composition is skewed to polar residues over residues Ser-584–Ser-593 and Gly-660–Thr-675.

The protein belongs to the FLO8 family.

Its subcellular location is the nucleus. Functionally, required for diploid filamentous growth, haploid invasive growth and flocculation. Putative transcriptional activator of FLO1. The sequence is that of Transcriptional activator FLO8 (FLO8) from Saccharomyces cerevisiae (strain Lalvin EC1118 / Prise de mousse) (Baker's yeast).